Reading from the N-terminus, the 196-residue chain is Probable GTP-binding protein EngB (196 aa).

Positions 22–193 constitute an EngB-type G domain; it reads SLPEVAFVGR…LEEIRKAKGE (172 aa). GTP-binding positions include 30–37, 57–61, 75–78, 142–145, and 172–174; these read GRSNVGKS, GRTQL, DLPG, TKSD, and FSA. Serine 37 and threonine 59 together coordinate Mg(2+).

This sequence belongs to the TRAFAC class TrmE-Era-EngA-EngB-Septin-like GTPase superfamily. EngB GTPase family. Mg(2+) is required as a cofactor.

Its function is as follows. Necessary for normal cell division and for the maintenance of normal septation. The chain is Probable GTP-binding protein EngB from Syntrophus aciditrophicus (strain SB).